A 268-amino-acid polypeptide reads, in one-letter code: MALVVKGKVNINEFIDLTKMEKILPSMFTPVKRVMCSKVDKIMVHENESLSEVNLLKGVKLIDSGYVCLAGLVVTGEWNLPDNCRGGVSVCLVDKRMERADEATLGSYYTAAAKKRFQFKVVPNYAITTQDAMKNVWQVLVNIRNVKMSAGFCPLSLEFVSVCIVYRNNIKLGLREKITNVRDGGPMELTEEVVDEFMEDVPMSIRLAKFRSRTGKKSDVRKGKNSSSDRSVPNKNYRNVKDFGGMSLKKNNLIDDDSEATVAESDSF.

The interval Gly-215–Phe-243 is disordered. Residues Asn-225 to Tyr-237 show a composition bias toward polar residues.

This sequence belongs to the tobamovirus movement protein family. In terms of assembly, binds to host RBCS at the plasmodesmata; this interaction seems required for viral systemic movement. In resistant plants, interacts with host MBP2C at host microtubules; this interaction prevents virus cell to cell movement. In resistant plants, interacts with host resistance (R) protein (e.g. tomato ToMV resistance protein TM-2(2), AC Q71BG9) at the host plasma membrane; this interaction triggers host defense responses leading to programmed cell death.

Its subcellular location is the host cytoplasm. It is found in the host cytoskeleton. The protein localises to the host cell junction. It localises to the host plasmodesma. In terms of biological role, transports viral genome to neighboring plant cells directly through plasmosdesmata, without any budding. The movement protein allows efficient cell to cell propagation, by bypassing the host cell wall barrier. Forms a ribonucleoprotein complex with viral RNA. Binds microtubules and modulates microtubule stability. Can bind double-stranded DNA. Triggers host hypersensitive defense reaction in incompatible plants harboring resistance (R) proteins. This Nicotiana tabacum (Common tobacco) protein is Movement protein (MP).